A 460-amino-acid chain; its full sequence is tRNA(Ile)-lysidine synthase (460 aa).

30-35 serves as a coordination point for ATP; the sequence is SGGLDS.

The protein belongs to the tRNA(Ile)-lysidine synthase family.

The protein resides in the cytoplasm. It catalyses the reaction cytidine(34) in tRNA(Ile2) + L-lysine + ATP = lysidine(34) in tRNA(Ile2) + AMP + diphosphate + H(+). Ligates lysine onto the cytidine present at position 34 of the AUA codon-specific tRNA(Ile) that contains the anticodon CAU, in an ATP-dependent manner. Cytidine is converted to lysidine, thus changing the amino acid specificity of the tRNA from methionine to isoleucine. The sequence is that of tRNA(Ile)-lysidine synthase from Yersinia pseudotuberculosis serotype I (strain IP32953).